A 635-amino-acid polypeptide reads, in one-letter code: S-type anion channel SLAH3 (635 aa).

Residues Met-1–Pro-253 are Cytoplasmic-facing. Residues Ser-102–Lys-121 are compositionally biased toward polar residues. The disordered stretch occupies residues Ser-102 to Ala-173. The span at Asn-153–Gly-165 shows a compositional bias: basic residues. Ser-189 bears the Phosphoserine mark. Residues Glu-193–Thr-217 are disordered. A helical transmembrane segment spans residues Phe-254–Trp-276. At Lys-277 to Trp-299 the chain is on the extracellular side. Residues Phe-300–Phe-320 traverse the membrane as a helical segment. Over Phe-321–Asn-335 the chain is Cytoplasmic. The chain crosses the membrane as a helical span at residues Phe-336 to Ile-356. Residues Thr-357 to Asp-358 are Extracellular-facing. Residues Leu-359–Tyr-379 form a helical membrane-spanning segment. The Cytoplasmic segment spans residues Gly-380–Pro-396. A helical transmembrane segment spans residues Thr-397–Leu-417. The Extracellular portion of the chain corresponds to Arg-418–Glu-419. A helical transmembrane segment spans residues Gly-420–Tyr-440. Residues Gln-441–Pro-455 are Cytoplasmic-facing. A helical transmembrane segment spans residues Val-456 to Gly-476. Residue Ser-477 is a topological domain, extracellular. Residues Phe-478–Val-498 traverse the membrane as a helical segment. The Cytoplasmic segment spans residues Arg-499–Arg-504. Residues Gly-505–Ala-525 traverse the membrane as a helical segment. At Thr-526–Met-541 the chain is on the extracellular side. A helical transmembrane segment spans residues Cys-542–Ile-562. The Cytoplasmic segment spans residues His-563–Ser-635. The tract at residues Phe-611 to Ser-635 is disordered. Residues Ser-614 to Ser-635 are compositionally biased toward polar residues.

The protein belongs to the SLAC1 S-type anion channel family. As to quaternary structure, homotrimer. Interacts with KAT1. Expressed in the whole plant, escpecially in vascular systems.

The protein resides in the cell membrane. Slow, weak voltage-dependent S-type anion efflux channel involved in maintenance of anion homeostasis. Binds to the highly selective inward-rectifying potassium channel KAT1 and inhibits its activity. Functions as an essential negative regulator of inward potassium channels in guard cells. Essential for the efficient stomatal closure and opening in guard cells. This is S-type anion channel SLAH3 (SLAH3) from Arabidopsis thaliana (Mouse-ear cress).